The chain runs to 93 residues: Integration host factor subunit beta (93 aa).

Belongs to the bacterial histone-like protein family. In terms of assembly, heterodimer of an alpha and a beta chain.

Its function is as follows. This protein is one of the two subunits of integration host factor, a specific DNA-binding protein that functions in genetic recombination as well as in transcriptional and translational control. This is Integration host factor subunit beta from Aliivibrio fischeri (strain ATCC 700601 / ES114) (Vibrio fischeri).